The primary structure comprises 174 residues: Small ribosomal subunit protein uS7c (174 aa).

This sequence belongs to the universal ribosomal protein uS7 family. Part of the 30S ribosomal subunit.

The protein localises to the plastid. The protein resides in the chloroplast. In terms of biological role, one of the primary rRNA binding proteins, it binds directly to 16S rRNA where it nucleates assembly of the head domain of the 30S subunit. The protein is Small ribosomal subunit protein uS7c (rps7) of Stigeoclonium helveticum (Green alga).